We begin with the raw amino-acid sequence, 275 residues long: Elongation factor Ts (275 aa).

Residues 76-79 (TDFV) are involved in Mg(2+) ion dislocation from EF-Tu.

The protein belongs to the EF-Ts family.

It is found in the cytoplasm. Its function is as follows. Associates with the EF-Tu.GDP complex and induces the exchange of GDP to GTP. It remains bound to the aminoacyl-tRNA.EF-Tu.GTP complex up to the GTP hydrolysis stage on the ribosome. The chain is Elongation factor Ts from Mycolicibacterium paratuberculosis (strain ATCC BAA-968 / K-10) (Mycobacterium paratuberculosis).